Here is a 775-residue protein sequence, read N- to C-terminus: Mitochondrial 15S rRNA processing factor CCM1 (775 aa).

The transit peptide at 1–18 (MLRYARTVRFSQVGNSVR) directs the protein to the mitochondrion. The segment at 35-65 (HDRKSPSHSLSPISNLPNHNDSSTERARKTL) is disordered. A compositionally biased stretch (polar residues) spans 41-55 (SHSLSPISNLPNHND). Positions 56–65 (SSTERARKTL) are enriched in basic and acidic residues. 5 PPR repeats span residues 289-323 (PKRTCEVMVQAYGKNGNINRIQDLLSEMKLHKIEI), 324-355 (SGMALTNILATCVYKARDHKQAVEIFDTMRFQ), 362-396 (GTRAYQDIIVSYVNNDDIEKAIDIYREMITEKIEP), 397-432 (NQQIMVALARGCASREAFKFKSWDFIFEINRNNWTP), and 433-467 (TLPTYEYMLYLSSRDGDLALTRALYSRLLKDNTVS).

This sequence belongs to the CCM1 family. In terms of assembly, binds to mitochondrial small subunit 15S rRNA.

The protein resides in the mitochondrion. In terms of biological role, regulates mitochondrial small subunit maturation by controlling 15S rRNA 5'-end processing. Localizes to the 5' precursor of the 15S rRNA in a position that is subsequently occupied by mS47 in the mature yeast mtSSU. Uses structure and sequence-specific RNA recognition, binding to a single-stranded region of the precursor and specifically recognizing bases -6 to -1. The exchange of Ccm1 for mS47 is coupled to the irreversible removal of precursor rRNA that is accompanied by conformational changes of the mitoribosomal proteins uS5m and mS26. These conformational changes signal completion of 5'-end rRNA processing through protection of the mature 5'-end of the 15S rRNA and stabilization of mS47. The removal of the 5' precursor together with the dissociation of Ccm1 may be catalyzed by the 5'-3' exoribonuclease Pet127. Involved in the specific removal of group I introns in mitochondrial encoded transcripts. This chain is Mitochondrial 15S rRNA processing factor CCM1 (CCM1), found in Scheffersomyces stipitis (strain ATCC 58785 / CBS 6054 / NBRC 10063 / NRRL Y-11545) (Yeast).